The chain runs to 509 residues: UDP-N-acetylmuramoyl-L-alanyl-D-glutamate--2,6-diaminopimelate ligase (509 aa).

Residue Ser-32 participates in UDP-N-acetyl-alpha-D-muramoyl-L-alanyl-D-glutamate binding. Residue 117–123 (GTNGKTT) participates in ATP binding. Residues 159–160 (TT), Ser-186, Gln-192, and Arg-194 contribute to the UDP-N-acetyl-alpha-D-muramoyl-L-alanyl-D-glutamate site. Residue Lys-226 is modified to N6-carboxylysine. Meso-2,6-diaminopimelate-binding positions include Arg-401, 425 to 428 (DNPR), Gly-476, and Glu-480. A Meso-diaminopimelate recognition motif motif is present at residues 425-428 (DNPR).

This sequence belongs to the MurCDEF family. MurE subfamily. Mg(2+) is required as a cofactor. In terms of processing, carboxylation is probably crucial for Mg(2+) binding and, consequently, for the gamma-phosphate positioning of ATP.

The protein localises to the cytoplasm. The catalysed reaction is UDP-N-acetyl-alpha-D-muramoyl-L-alanyl-D-glutamate + meso-2,6-diaminopimelate + ATP = UDP-N-acetyl-alpha-D-muramoyl-L-alanyl-gamma-D-glutamyl-meso-2,6-diaminopimelate + ADP + phosphate + H(+). It functions in the pathway cell wall biogenesis; peptidoglycan biosynthesis. Catalyzes the addition of meso-diaminopimelic acid to the nucleotide precursor UDP-N-acetylmuramoyl-L-alanyl-D-glutamate (UMAG) in the biosynthesis of bacterial cell-wall peptidoglycan. The protein is UDP-N-acetylmuramoyl-L-alanyl-D-glutamate--2,6-diaminopimelate ligase of Prochlorococcus marinus (strain NATL2A).